The sequence spans 361 residues: Histidinol-phosphate aminotransferase (361 aa).

Residue lysine 219 is modified to N6-(pyridoxal phosphate)lysine.

This sequence belongs to the class-II pyridoxal-phosphate-dependent aminotransferase family. Histidinol-phosphate aminotransferase subfamily. As to quaternary structure, homodimer. Pyridoxal 5'-phosphate is required as a cofactor.

It carries out the reaction L-histidinol phosphate + 2-oxoglutarate = 3-(imidazol-4-yl)-2-oxopropyl phosphate + L-glutamate. It functions in the pathway amino-acid biosynthesis; L-histidine biosynthesis; L-histidine from 5-phospho-alpha-D-ribose 1-diphosphate: step 7/9. This Acinetobacter baylyi (strain ATCC 33305 / BD413 / ADP1) protein is Histidinol-phosphate aminotransferase.